The following is a 362-amino-acid chain: Dual-specificity RNA methyltransferase RlmN (362 aa).

Catalysis depends on glutamate 91, which acts as the Proton acceptor. One can recognise a Radical SAM core domain in the interval glutamate 97–aspartate 333. A disulfide bond links cysteine 104 and cysteine 338. Residues cysteine 111, cysteine 115, and cysteine 118 each coordinate [4Fe-4S] cluster. S-adenosyl-L-methionine-binding positions include glycine 164–glutamate 165, serine 196, serine 218–histidine 220, and asparagine 295. Cysteine 338 acts as the S-methylcysteine intermediate in catalysis.

Belongs to the radical SAM superfamily. RlmN family. [4Fe-4S] cluster serves as cofactor.

The protein resides in the cytoplasm. The enzyme catalyses adenosine(2503) in 23S rRNA + 2 reduced [2Fe-2S]-[ferredoxin] + 2 S-adenosyl-L-methionine = 2-methyladenosine(2503) in 23S rRNA + 5'-deoxyadenosine + L-methionine + 2 oxidized [2Fe-2S]-[ferredoxin] + S-adenosyl-L-homocysteine. It catalyses the reaction adenosine(37) in tRNA + 2 reduced [2Fe-2S]-[ferredoxin] + 2 S-adenosyl-L-methionine = 2-methyladenosine(37) in tRNA + 5'-deoxyadenosine + L-methionine + 2 oxidized [2Fe-2S]-[ferredoxin] + S-adenosyl-L-homocysteine. Specifically methylates position 2 of adenine 2503 in 23S rRNA and position 2 of adenine 37 in tRNAs. m2A2503 modification seems to play a crucial role in the proofreading step occurring at the peptidyl transferase center and thus would serve to optimize ribosomal fidelity. The polypeptide is Dual-specificity RNA methyltransferase RlmN (Methylobacillus flagellatus (strain ATCC 51484 / DSM 6875 / VKM B-1610 / KT)).